The following is a 207-amino-acid chain: Myosin light chain 6B (207 aa).

The disordered stretch occupies residues 1–50; sequence MPPKKDAPVKKPAGPSISKPAAKSTPGTPLAKAKAEPAAPQAPAKSQEPP. Residues 36–50 show a composition bias toward low complexity; the sequence is EPAAPQAPAKSQEPP. EF-hand domains lie at 63–98, 140–175, and 175–207; these read DQLE…LGQN, GTYE…LGEK, and KMTE…ILSL.

Myosin is a hexamer of 2 heavy chains and 4 light chains.

In terms of biological role, regulatory light chain of myosin. Does not bind calcium. The polypeptide is Myosin light chain 6B (Mus musculus (Mouse)).